Here is a 644-residue protein sequence, read N- to C-terminus: Leucine-rich repeat protein soc-2 homolog (644 aa).

Residues 1 to 19 (MNLCSSGATASTTSLSSTG) are compositionally biased toward low complexity. Disordered stretches follow at residues 1 to 60 (MNLC…APTL) and 82 to 150 (NSPA…IQAD). Composition is skewed to gly residues over residues 26-50 (GVPG…GGKA) and 87-96 (GAGGASGFTG). Residues 99–117 (QQPTGSNGHSHLHNENNAN) show a composition bias toward polar residues. LRR repeat units lie at residues 164 to 185 (GIKR…VKEC), 187 to 208 (HLTE…IGCL), 210 to 231 (SLRN…LQNC), 233 to 254 (QLKV…IYRL), 256 to 277 (SLTT…LRQL), 279 to 300 (NLTM…IGAL), 302 to 323 (NLTT…IGNC), 325 to 346 (NLSA…IGNL), 348 to 370 (SLVR…KNCK), 371 to 392 (SMDE…MLAS), 395 to 416 (GLTT…GPAQ), 419 to 440 (NVYS…IFSR), 443 to 464 (GLTK…IGTW), 466 to 487 (NMVE…IMNL), 489 to 510 (NLEI…IGNL), 512 to 533 (RLRI…IGLL), 535 to 556 (ELQR…IGHL), 558 to 579 (NLTH…IGSL), 581 to 603 (SLEN…LALC), and 605 to 626 (NLKY…IQAG).

Belongs to the SHOC2 family.

Its function is as follows. Acts as a Ras effector and participates in MAPK pathway activation. Probably acts as a regulatory subunit of protein phosphatase that specifically dephosphorylates Raf kinase and stimulate Raf activity at specialized signaling complexes upon Ras activation. The chain is Leucine-rich repeat protein soc-2 homolog (Sur-8) from Drosophila erecta (Fruit fly).